The chain runs to 450 residues: tRNA modification GTPase MnmE (450 aa).

(6S)-5-formyl-5,6,7,8-tetrahydrofolate contacts are provided by arginine 20, glutamate 78, and lysine 117. The TrmE-type G domain maps to 211–372 (GFRMVIVGKP…LEEAIYRETQ (162 aa)). Asparagine 221 serves as a coordination point for K(+). GTP-binding positions include 221–226 (NVGKST), 240–246 (TDIPGTT), and 265–268 (DTAG). Serine 225 contributes to the Mg(2+) binding site. Residues threonine 240, isoleucine 242, and threonine 245 each coordinate K(+). Threonine 246 contacts Mg(2+). Lysine 450 serves as a coordination point for (6S)-5-formyl-5,6,7,8-tetrahydrofolate.

The protein belongs to the TRAFAC class TrmE-Era-EngA-EngB-Septin-like GTPase superfamily. TrmE GTPase family. Homodimer. Heterotetramer of two MnmE and two MnmG subunits. The cofactor is K(+).

The protein resides in the cytoplasm. In terms of biological role, exhibits a very high intrinsic GTPase hydrolysis rate. Involved in the addition of a carboxymethylaminomethyl (cmnm) group at the wobble position (U34) of certain tRNAs, forming tRNA-cmnm(5)s(2)U34. The polypeptide is tRNA modification GTPase MnmE (Thermotoga petrophila (strain ATCC BAA-488 / DSM 13995 / JCM 10881 / RKU-1)).